We begin with the raw amino-acid sequence, 447 residues long: Methylenetetrahydrofolate--tRNA-(uracil-5-)-methyltransferase TrmFO (447 aa).

9-14 (GGGLAG) lines the FAD pocket.

This sequence belongs to the MnmG family. TrmFO subfamily. FAD serves as cofactor.

The protein localises to the cytoplasm. It catalyses the reaction uridine(54) in tRNA + (6R)-5,10-methylene-5,6,7,8-tetrahydrofolate + NADH + H(+) = 5-methyluridine(54) in tRNA + (6S)-5,6,7,8-tetrahydrofolate + NAD(+). It carries out the reaction uridine(54) in tRNA + (6R)-5,10-methylene-5,6,7,8-tetrahydrofolate + NADPH + H(+) = 5-methyluridine(54) in tRNA + (6S)-5,6,7,8-tetrahydrofolate + NADP(+). Functionally, catalyzes the folate-dependent formation of 5-methyl-uridine at position 54 (M-5-U54) in all tRNAs. The protein is Methylenetetrahydrofolate--tRNA-(uracil-5-)-methyltransferase TrmFO of Paramagnetospirillum magneticum (strain ATCC 700264 / AMB-1) (Magnetospirillum magneticum).